We begin with the raw amino-acid sequence, 646 residues long: Secretogranin-1 (646 aa).

Positions 1-20 are cleaved as a signal peptide; the sequence is MQPAALLGLLGATVVAAVSS. Cys36 and Cys57 are joined by a disulfide. A compositionally biased stretch (basic and acidic residues) spans 67–90; sequence ELKNEEKSENENTRFEVRLLRDPA. The disordered stretch occupies residues 67-483; sequence ELKNEEKSEN…GKQYAPHHIT (417 aa). At Ser74 the chain carries Phosphoserine. Thr79 and Thr92 each carry phosphothreonine. 4 positions are modified to phosphoserine: Ser93, Ser99, Ser100, and Ser104. O-linked (Xyl...) (chondroitin sulfate) serine glycosylation occurs at Ser93. The O-linked (GalNAc...) threonine glycan is linked to Thr113. Composition is skewed to basic and acidic residues over residues 119–128 and 137–173; these read SGGHSRERAG and KEAK…ERLS. Phosphoserine occurs at positions 123, 146, and 168. Residues 182–191 show a composition bias toward polar residues; that stretch reads AFLNQRNQTP. O-linked (GalNAc...) threonine glycosylation occurs at Thr190. Ser205 carries the phosphoserine modification. Basic and acidic residues predominate over residues 208-228; the sequence is GLEKSHSRERSSQESGEETKS. A glycan (O-linked (Xyl...) (chondroitin sulfate) serine) is linked at Ser222. Over residues 260–270 the composition is skewed to basic residues; that stretch reads RHSRPRHHHGR. Ser276, Ser277, and Ser295 each carry phosphoserine. Tyr315 is subject to Sulfotyrosine. The segment covering 340–361 has biased composition (basic and acidic residues); sequence GRGEHQALRRPSEESLEQENKR. Residues Ser351 and Ser354 each carry the phosphoserine modification. Phosphotyrosine is present on Tyr374. Phosphoserine is present on residues Ser375 and Ser378. The span at 406 to 425 shows a compositional bias: basic and acidic residues; that stretch reads TDEKRFLGETHHRVQESQRD. Position 441 is a sulfotyrosine (Tyr441). 2 stretches are compositionally biased toward basic and acidic residues: residues 442-451 and 459-472; these read GEEKGEEAAR and DPRD…EARL. Residue Gln476 is modified to Pyrrolidone carboxylic acid; in secretogranin-1(476-566). Phosphoserine occurs at positions 502, 503, and 514. The residue at position 535 (Tyr535) is a Sulfotyrosine. Pyrrolidone carboxylic acid; in peptide BAM-1745 is present on Gln567. Ser584 carries the phosphoserine modification. The interval 588–620 is disordered; sequence PDFYDSEEQMSPQHTAENEEEKAGQGVLTEEEE. A Sulfotyrosine modification is found at Tyr591. 2 positions are modified to phosphoserine: Ser593 and Ser598. Gln634 bears the Pyrrolidone carboxylic acid; in Secretolytin; partial mark.

Belongs to the chromogranin/secretogranin protein family. As to quaternary structure, interacts with ITPR1 in the secretory granules. In terms of processing, O-glycosylated by the trisaccharide, GalNAc-Gal-NeuAc, on 2 sites in the N-terminal. May be glycated. Post-translationally, extensively phosphorylated. Differentially processed on numerous sites throughout the sequence depending on tissue type.

It is found in the cytoplasmic vesicle. The protein resides in the secretory vesicle membrane. Its subcellular location is the secreted. Its function is as follows. Secretogranin-1 is a neuroendocrine secretory granule protein, which may be the precursor for other biologically active peptides. The 16 pairs of basic AA distributed throughout its sequence may be used as proteolytic cleavage sites. In terms of biological role, secretolytin has antibacterial activity. The protein is Secretogranin-1 (CHGB) of Bos taurus (Bovine).